Here is a 336-residue protein sequence, read N- to C-terminus: Atypical chemokine receptor 1 (336 aa).

Topologically, residues 1-63 are extracellular; it reads MGNCLHTAEL…CNLLDDSALP (63 aa). Asn-16, Asn-27, and Asn-33 each carry an N-linked (GlcNAc...) asparagine glycan. Disulfide bonds link Cys-51/Cys-276 and Cys-129/Cys-195. A helical membrane pass occupies residues 64–84; that stretch reads FFILTSVLGILASSTVLFILF. At 85 to 95 the chain is on the cytoplasmic side; it reads RPLFRWQLCPG. Residues 96-116 form a helical membrane-spanning segment; the sequence is WPVLAQLAVGSALFSIVVPIL. The Extracellular portion of the chain corresponds to 117–129; sequence APGLGSTHSSALC. Residues 130–153 traverse the membrane as a helical segment; that stretch reads SLGYCVWYGSAFAQALLLGCHASL. Residues 154-166 are Cytoplasmic-facing; sequence GHRLGAGQVPGLT. The helical transmembrane segment at 167 to 187 threads the bilayer; sequence LGLTVGIWGVAALLTLPVTLA. Residues 188–207 are Extracellular-facing; the sequence is SGASGGLCTPIHSTELKALQ. Residues 208-228 form a helical membrane-spanning segment; the sequence is ATHTVACLAIFVLLPLGLFGA. Topologically, residues 229–244 are cytoplasmic; that stretch reads KGLKKALGMGPGPWMN. The helical transmembrane segment at 245–265 threads the bilayer; that stretch reads ILWAWFIFWWPHGVVLGLDFL. At 266–287 the chain is on the extracellular side; it reads VRSKLLLLSTCLAQQALDLLLN. A helical transmembrane segment spans residues 288-308; the sequence is LAEALAILHCVATPLILALFY. The Cytoplasmic segment spans residues 309–336; it reads HQATRTLLPSLPLPEGWSSHLDTLGSKS.

The protein belongs to the G-protein coupled receptor 1 family. Atypical chemokine receptor subfamily.

The protein resides in the early endosome. It localises to the recycling endosome. The protein localises to the membrane. Atypical chemokine receptor that controls chemokine levels and localization via high-affinity chemokine binding that is uncoupled from classic ligand-driven signal transduction cascades, resulting instead in chemokine sequestration, degradation, or transcytosis. Also known as interceptor (internalizing receptor) or chemokine-scavenging receptor or chemokine decoy receptor. Has a promiscuous chemokine-binding profile, interacting with inflammatory chemokines of both the CXC and the CC subfamilies but not with homeostatic chemokines. Acts as a receptor for chemokines including CCL2, CCL5, CCL7, CCL11, CCL13, CCL14, CCL17, CXCL5, CXCL6, IL8/CXCL8, CXCL11, GRO, RANTES, MCP-1 and TARC. May regulate chemokine bioavailability and, consequently, leukocyte recruitment through two distinct mechanisms: when expressed in endothelial cells, it sustains the abluminal to luminal transcytosis of tissue-derived chemokines and their subsequent presentation to circulating leukocytes; when expressed in erythrocytes, serves as blood reservoir of cognate chemokines but also as a chemokine sink, buffering potential surges in plasma chemokine levels. This Gorilla gorilla gorilla (Western lowland gorilla) protein is Atypical chemokine receptor 1 (ACKR1).